We begin with the raw amino-acid sequence, 89 residues long: UPF0147 protein TV0625 (89 aa).

It belongs to the UPF0147 family.

The chain is UPF0147 protein TV0625 from Thermoplasma volcanium (strain ATCC 51530 / DSM 4299 / JCM 9571 / NBRC 15438 / GSS1).